A 378-amino-acid polypeptide reads, in one-letter code: MTENKSFKESHPLDDFISDKELSNTTIQKEKLTIEQQKQVDTISKQINPLDNEGLLAFGSDLQKQMSQFSHQMLDEVQSKDVGPIGDTLSDLMSKLKSVNPNELNTDKPSMLKRIFSRAKSSINEIFSRMQSVSAQVDRITIQLQKHQTHLTRDIELLDTLYDKNKQYFDDLSLYIIAAQQKKLQLENEKLPQLQQQAQQSTNQMDIQQVADMQQFIDRLDKRIYDLQLSRQIALQTAPQIRMIQNVNQALAEKIQSSILTSIPLWKNQMAIALTLMRQRNAVAAQRAVTDTTNDLLTANAEMLKQNAIETATENERGIVDLDTLKRTQRNIIETIEETLIIQQHGREERQLAEKELQQLEQDLKSHLVNIKGPNKQS.

The protein belongs to the TelA family.

This chain is TelA-like protein SAB1262, found in Staphylococcus aureus (strain bovine RF122 / ET3-1).